The following is a 323-amino-acid chain: Protein MEI2-like 6 (323 aa).

The polypeptide is Protein MEI2-like 6 (ML6) (Oryza sativa subsp. japonica (Rice)).